We begin with the raw amino-acid sequence, 274 residues long: MAD2L1-binding protein (274 aa).

The interaction with MAD2L1 stretch occupies residues 45–78; it reads ASEAFCPRDCMVPVVFPGPVSQEGCCQFTCELLK. Serine 102 is subject to Phosphoserine.

This sequence belongs to the MAD2L1BP family. Interacts with MAD2L1.

Its subcellular location is the nucleus. It is found in the cytoplasm. The protein resides in the cytoskeleton. The protein localises to the spindle. Its function is as follows. May function to silence the spindle checkpoint and allow mitosis to proceed through anaphase by binding MAD2L1 after it has become dissociated from the MAD2L1-CDC20 complex. The protein is MAD2L1-binding protein (MAD2L1BP) of Homo sapiens (Human).